A 402-amino-acid polypeptide reads, in one-letter code: Cholinephosphotransferase 1 (402 aa).

The Cytoplasmic segment spans residues 1–62 (MGLAEGLAAR…LVEKVPLWLA (62 aa)). The helical transmembrane segment at 63–83 (PNTITMVGLLLNVLSTLILVC) threads the bilayer. Residue asparagine 64 coordinates CDP-choline. At 84 to 93 (YCPTATEGAP) the chain is on the lumenal side. The chain crosses the membrane as a helical span at residues 94–118 (FWTYLLCAIGLFVYQSLDAIDGKQA). Mg(2+)-binding residues include aspartate 111 and aspartate 114. Residue arginine 119 coordinates CDP-choline. The Cytoplasmic segment spans residues 119-125 (RRTNSSS). The chain crosses the membrane as a helical span at residues 126 to 150 (PLGEMFDHGCDSISIVFVNLGTIAA). Aspartate 132 is a Mg(2+) binding site. The Proton acceptor role is filled by histidine 133. Residue aspartate 136 coordinates Mg(2+). Residues 151–160 (VRLGTLPGWM) are Lumenal-facing. Residues 161-179 (FYCCFVGMFMFYCAQWQTY) traverse the membrane as a helical segment. At 180-190 (VCGTLKFGIID) the chain is on the cytoplasmic side. Residues 191–207 (VTELQISVTVMFLMTAV) traverse the membrane as a helical segment. The Lumenal portion of the chain corresponds to 208–222 (CGPELWDYEIPFTGL). A helical membrane pass occupies residues 223–248 (PMKTIPLLGIIGGTVYSCSNYFRVIL). Residues 249 to 265 (SGGVGKNGSTVAGTSVL) lie on the Cytoplasmic side of the membrane. A helical transmembrane segment spans residues 266 to 281 (SPGLHIGLVLLLALMI). Over 282-293 (YKKSTTNLFLQN) the chain is Lumenal. The helical transmembrane segment at 294 to 316 (PCLYTLAFGFVSAKITIKLVIAH) threads the bilayer. The Cytoplasmic portion of the chain corresponds to 317–329 (MTKSEISLQDTAF). The helical transmembrane segment at 330 to 339 (IGPGLLFFNQ) threads the bilayer. Residues 340–346 (YFNSFID) are Lumenal-facing. A helical transmembrane segment spans residues 347–376 (EYIVLWIAMVISFADLLRYCISVCLQIATH). The Cytoplasmic portion of the chain corresponds to 377 to 402 (LRISVFRISSNQAAEQVQTQKQKLTD).

The protein belongs to the CDP-alcohol phosphatidyltransferase class-I family. In terms of assembly, homodimer. Mg(2+) serves as cofactor. The cofactor is Mn(2+).

Its subcellular location is the golgi apparatus membrane. It carries out the reaction CDP-choline + a 1,2-diacyl-sn-glycerol = a 1,2-diacyl-sn-glycero-3-phosphocholine + CMP + H(+). It catalyses the reaction 1,2-dioctanoyl-sn-glycerol + CDP-choline = 1,2-dioctanoyl-sn-glycero-3-phosphocholine + CMP + H(+). The enzyme catalyses 1-octadecanoyl-2-(5Z,8Z,11Z,14Z-eicosatetraenoyl)-sn-glycerol + CDP-choline = 1-octadecanoyl-2-(5Z,8Z,11Z,14Z-eicosatetraenoyl)-sn-glycero-3-phosphocholine + CMP + H(+). The catalysed reaction is 1-hexadecanoyl-2-(9Z-octadecenoyl)-sn-glycerol + CDP-choline = 1-hexadecanoyl-2-(9Z-octadecenoyl)-sn-glycero-3-phosphocholine + CMP + H(+). It carries out the reaction 1-hexadecanoyl-2-(4Z,7Z,10Z,13Z,16Z,19Z-docosahexaenoyl)-sn-glycerol + CDP-choline = 1-hexadecanoyl-2-(4Z,7Z,10Z,13Z,16Z,19Z-docosahexaenoyl)-sn-glycero-3-phosphocholine + CMP + H(+). The protein operates within phospholipid metabolism; phosphatidylcholine biosynthesis; phosphatidylcholine from phosphocholine: step 2/2. Its function is as follows. Catalyzes the final step of de novo phosphatidylcholine (PC) synthesis, i.e. the transfer of choline phosphate from CDP-choline to the free hydroxyl of a diacylglycerol (DAG), producing a PC. It thereby plays a central role in the formation and maintenance of vesicular membranes. Shows a high preference for CDP-choline over CDP-ethanolamine as substrate. The polypeptide is Cholinephosphotransferase 1 (chpt1) (Xenopus laevis (African clawed frog)).